The following is a 366-amino-acid chain: Protein-glutamate methylesterase/protein-glutamine glutaminase 2 (366 aa).

The region spanning 3–119 (RLLIADDSAL…SLELDRLRPL (117 aa)) is the Response regulatory domain. Position 53 is a 4-aspartylphosphate (D53). The disordered stretch occupies residues 149-168 (AASSPRAKAARRGAARQRAK). Basic residues predominate over residues 156–166 (KAARRGAARQR). The region spanning 171-363 (PAPGLVLIGT…AAVIEWGNAD (193 aa)) is the CheB-type methylesterase domain. Catalysis depends on residues S181, H208, and D305.

This sequence belongs to the CheB family. Post-translationally, phosphorylated by CheA. Phosphorylation of the N-terminal regulatory domain activates the methylesterase activity.

It is found in the cytoplasm. It carries out the reaction [protein]-L-glutamate 5-O-methyl ester + H2O = L-glutamyl-[protein] + methanol + H(+). The enzyme catalyses L-glutaminyl-[protein] + H2O = L-glutamyl-[protein] + NH4(+). Its function is as follows. Involved in chemotaxis. Part of a chemotaxis signal transduction system that modulates chemotaxis in response to various stimuli. Catalyzes the demethylation of specific methylglutamate residues introduced into the chemoreceptors (methyl-accepting chemotaxis proteins or MCP) by CheR. Also mediates the irreversible deamidation of specific glutamine residues to glutamic acid. This chain is Protein-glutamate methylesterase/protein-glutamine glutaminase 2, found in Rhodopseudomonas palustris (strain BisB18).